A 241-amino-acid chain; its full sequence is Small ribosomal subunit protein eS4 (241 aa).

Residues 37–100 (LPIVVWARDQ…GKHYRILRDK (64 aa)) enclose the S4 RNA-binding domain.

It belongs to the eukaryotic ribosomal protein eS4 family.

The chain is Small ribosomal subunit protein eS4 from Methanospirillum hungatei JF-1 (strain ATCC 27890 / DSM 864 / NBRC 100397 / JF-1).